The chain runs to 31 residues: Nemertide alpha-7 (31 aa).

3 cysteine pairs are disulfide-bonded: cysteine 2-cysteine 16, cysteine 9-cysteine 20, and cysteine 15-cysteine 26. Proline 29 is modified (4-hydroxyproline).

This sequence belongs to the nemertide family. As to expression, confined to the epidermis and to the mucus layer.

It localises to the secreted. Its function is as follows. Potent toxin, demonstrating strong inhibitory effects on insect sodium channels (Nav) and reduced activity on mammalian sodium channels. Potently inhibits inactivation of insect sodium channels of B.germanica (BgNav1) (EC(50)=9.5 nM). The toxin also delays the inactivation of most mammalian Nav (human Nav1.1/SCN1A; EC(50)=171.5 nM, rat Nav1.2/SCN2A; EC(50)=50.4 nM, rat Nav1.3/SCN3A; EC(50)=170.2 nM, rat Nav1.4/SCN4A; EC(50)=810.6 nM, human Nav1.5/SCN5A; EC(50)=155.6 nM, mouse Nav1.6/SCN8A; EC(50)=147.6 nM, human Nav1.9/SCN9A; EC(50)=129 nM). Inactivation is completely prevented by a concentration of 1 uM, resulting in sustained, non-inactivating currents. In addition, the toxin significantly enhances the recovery from inactivation, and the open state is not required for the toxin to interact with the channel. In vivo, injection into brine shrimp (Artemia salina) stops movement or causes death after 24 hours (EC(50)=6.1 uM). This Lineus ruber (Red bootlace) protein is Nemertide alpha-7.